The primary structure comprises 234 residues: Large ribosomal subunit protein uL1 (234 aa).

This sequence belongs to the universal ribosomal protein uL1 family. Part of the 50S ribosomal subunit.

In terms of biological role, binds directly to 23S rRNA. The L1 stalk is quite mobile in the ribosome, and is involved in E site tRNA release. Its function is as follows. Protein L1 is also a translational repressor protein, it controls the translation of the L11 operon by binding to its mRNA. The protein is Large ribosomal subunit protein uL1 of Psychromonas ingrahamii (strain DSM 17664 / CCUG 51855 / 37).